The following is a 103-amino-acid chain: Small ribosomal subunit protein uS10 (103 aa).

It belongs to the universal ribosomal protein uS10 family. As to quaternary structure, part of the 30S ribosomal subunit.

In terms of biological role, involved in the binding of tRNA to the ribosomes. This is Small ribosomal subunit protein uS10 from Sphingopyxis alaskensis (strain DSM 13593 / LMG 18877 / RB2256) (Sphingomonas alaskensis).